We begin with the raw amino-acid sequence, 250 residues long: Lymphocyte function-associated antigen 3 (250 aa).

The signal sequence occupies residues methionine 1 to cysteine 28. The Extracellular portion of the chain corresponds to phenylalanine 29 to arginine 215. Residues serine 30–leucine 121 form the Ig-like domain. N-linked (GlcNAc...) asparagine glycans are attached at residues asparagine 40, asparagine 94, asparagine 109, asparagine 135, asparagine 169, and asparagine 195. A disulfide bond links cysteine 142 and cysteine 187. The chain crosses the membrane as a helical span at residues tyrosine 216–leucine 238. Residues lysine 239–asparagine 250 lie on the Cytoplasmic side of the membrane.

In terms of assembly, interacts with CD2. Interacts with CMTM6. As to quaternary structure, (Microbial infection) Interacts with human cytomegalovirus protein UL148; this interaction retains immature CD58 intracellularly.

It is found in the cell membrane. In terms of biological role, ligand of the T-lymphocyte CD2 glycoprotein. This interaction is important in mediating thymocyte interactions with thymic epithelial cells, antigen-independent and -dependent interactions of T-lymphocytes with target cells and antigen-presenting cells and the T-lymphocyte rosetting with erythrocytes. In addition, the LFA-3/CD2 interaction may prime response by both the CD2+ and LFA-3+ cells. The sequence is that of Lymphocyte function-associated antigen 3 (CD58) from Homo sapiens (Human).